Consider the following 204-residue polypeptide: Large ribosomal subunit protein bL25 (204 aa).

The protein belongs to the bacterial ribosomal protein bL25 family. CTC subfamily. Part of the 50S ribosomal subunit; part of the 5S rRNA/L5/L18/L25 subcomplex. Contacts the 5S rRNA. Binds to the 5S rRNA independently of L5 and L18.

Its function is as follows. This is one of the proteins that binds to the 5S RNA in the ribosome where it forms part of the central protuberance. This chain is Large ribosomal subunit protein bL25, found in Wolbachia sp. subsp. Brugia malayi (strain TRS).